A 41-amino-acid polypeptide reads, in one-letter code: Large ribosomal subunit protein bL36 (41 aa).

The protein belongs to the bacterial ribosomal protein bL36 family.

The polypeptide is Large ribosomal subunit protein bL36 (Erythrobacter litoralis (strain HTCC2594)).